Consider the following 252-residue polypeptide: Thiazole synthase (252 aa).

The active-site Schiff-base intermediate with DXP is the K91. 1-deoxy-D-xylulose 5-phosphate-binding positions include G152, 179–180 (AG), and 201–202 (NT).

It belongs to the ThiG family. Homotetramer. Forms heterodimers with either ThiH or ThiS.

The protein resides in the cytoplasm. It carries out the reaction [ThiS sulfur-carrier protein]-C-terminal-Gly-aminoethanethioate + 2-iminoacetate + 1-deoxy-D-xylulose 5-phosphate = [ThiS sulfur-carrier protein]-C-terminal Gly-Gly + 2-[(2R,5Z)-2-carboxy-4-methylthiazol-5(2H)-ylidene]ethyl phosphate + 2 H2O + H(+). Its pathway is cofactor biosynthesis; thiamine diphosphate biosynthesis. Its function is as follows. Catalyzes the rearrangement of 1-deoxy-D-xylulose 5-phosphate (DXP) to produce the thiazole phosphate moiety of thiamine. Sulfur is provided by the thiocarboxylate moiety of the carrier protein ThiS. In vitro, sulfur can be provided by H(2)S. This Erwinia amylovora (Fire blight bacteria) protein is Thiazole synthase.